The chain runs to 286 residues: Small ribosomal subunit protein uS2 (286 aa).

The tract at residues 257–286 is disordered; the sequence is KDNKSNKSNTINADENIKESDLIGGSNNEG.

Belongs to the universal ribosomal protein uS2 family.

The protein is Small ribosomal subunit protein uS2 of Ehrlichia ruminantium (strain Gardel).